Consider the following 1407-residue polypeptide: JmjC domain-containing histone demethylation protein 1 (1407 aa).

2 disordered regions span residues 1 to 86 (MISA…SSTI) and 98 to 151 (PTFT…NAFS). Basic and acidic residues-rich tracts occupy residues 55 to 67 (DHVR…KRPS) and 125 to 140 (PVER…RDES). The span at 141–150 (SYTQHRSNAF) shows a compositional bias: polar residues. The PHD-type zinc-finger motif lies at 323 to 382 (QASCATCNLVRIPVDNEDQDVTWISCDGCKRWFHIVCAGFKNDRETRTVDKFICKTCRPI). The 159-residue stretch at 577–735 (VSQSKLGRLI…MQIKIAKIEK (159 aa)) folds into the JmjC domain. A substrate-binding site is contributed by Thr-628. His-631 and Asp-633 together coordinate Fe cation. Lys-648 provides a ligand contact to substrate. A Fe cation-binding site is contributed by His-703. Disordered regions lie at residues 893-987 (KLSL…LGPK), 1004-1027 (KEEN…HHTP), 1122-1183 (IKAQ…QDSV), and 1252-1389 (DEMD…SLRL). Basic and acidic residues-rich tracts occupy residues 896–914 (LAEK…RNAD) and 928–938 (LSERPAVDIQK). Residues 1008 to 1027 (NGASGSQMTVSTSSLGHHTP) show a composition bias toward polar residues. Residues 1254–1264 (MDIHDQVDAGG) are compositionally biased toward basic and acidic residues. Residues 1273-1284 (PSSGSRQSSRQP) show a composition bias toward low complexity. Over residues 1285–1296 (RQVERYMPEVHF) the composition is skewed to basic and acidic residues. Residues 1297 to 1349 (AKTAKSTTTTPQTTRRSSFGSSGRKTTPGLSSGSKKSGSRPSSSHGKKSLSPS) show a composition bias toward low complexity.

Belongs to the JHDM1 histone demethylase family. The cofactor is Fe(2+).

The protein resides in the nucleus. The enzyme catalyses N(6),N(6)-dimethyl-L-lysyl(36)-[histone H3] + 2 2-oxoglutarate + 2 O2 = L-lysyl(36)-[histone H3] + 2 formaldehyde + 2 succinate + 2 CO2. In terms of biological role, histone demethylase that specifically demethylates 'Lys-36' of histone H3, thereby playing a central role in histone code. The chain is JmjC domain-containing histone demethylation protein 1 (jhd1) from Emericella nidulans (strain FGSC A4 / ATCC 38163 / CBS 112.46 / NRRL 194 / M139) (Aspergillus nidulans).